Consider the following 123-residue polypeptide: MADLAKIVEDLSNLTLLEAAELSKLLEEKWGVSAAAPVAVATVAGAAAPAAEEKTEFDVILVDCGAQKINVIKEVRALTGLGLKEAKDLVEGAPKPIKEGASKDEAEKIKSQLEAAGAKVEFK.

Belongs to the bacterial ribosomal protein bL12 family. As to quaternary structure, homodimer. Part of the ribosomal stalk of the 50S ribosomal subunit. Forms a multimeric L10(L12)X complex, where L10 forms an elongated spine to which 2 to 4 L12 dimers bind in a sequential fashion. Binds GTP-bound translation factors.

Forms part of the ribosomal stalk which helps the ribosome interact with GTP-bound translation factors. Is thus essential for accurate translation. The chain is Large ribosomal subunit protein bL12 from Bartonella quintana (strain Toulouse) (Rochalimaea quintana).